A 313-amino-acid chain; its full sequence is Olfactory receptor 10K1 (313 aa).

The Extracellular portion of the chain corresponds to 1 to 25 (MEQVNKTVVREFVVLGFSSLARLQQ). N5 carries an N-linked (GlcNAc...) asparagine glycan. A helical transmembrane segment spans residues 26 to 46 (LLFVIFLLLYLFTLGTNAIII). Topologically, residues 47–54 (STIVLDRA) are cytoplasmic. The helical transmembrane segment at 55–75 (LHTPMYFFLAILSCSEICYTF) threads the bilayer. The Extracellular portion of the chain corresponds to 76–99 (VIVPKMLVDLLSQKKTISFLGCAI). A helical membrane pass occupies residues 100–120 (QMFSFLFFGSSHSFLLAAMGY). Topologically, residues 121–139 (DRYMAICNPLRYSVLMGHG) are cytoplasmic. A helical membrane pass occupies residues 140–160 (VCMGLMAAACACGFTVSLVTT). Over 161–197 (SLVFHLPFHSSNQLHHFFCDISPVLKLASQHSGFSQL) the chain is Extracellular. A helical transmembrane segment spans residues 198–217 (VIFMLGVFALVIPLLLILVS). The Cytoplasmic portion of the chain corresponds to 218-237 (YIRIISAILKIPSSVGRYKT). Residues 238-258 (FSTCASHLIVVTVHYSCASFI) traverse the membrane as a helical segment. Residues 259–271 (YLRPKTNYTSSQD) lie on the Extracellular side of the membrane. An N-linked (GlcNAc...) asparagine glycan is attached at N265. The helical transmembrane segment at 272–292 (TLISVSYTILTPLFNPMIYSL) threads the bilayer. Residues 293 to 313 (RNKEFKSALRRTIGQTFYPLS) lie on the Cytoplasmic side of the membrane.

It belongs to the G-protein coupled receptor 1 family.

The protein resides in the cell membrane. Its function is as follows. Odorant receptor. This chain is Olfactory receptor 10K1 (OR10K1), found in Homo sapiens (Human).